Here is a 389-residue protein sequence, read N- to C-terminus: Phosphopentomutase (389 aa).

Mn(2+)-binding residues include aspartate 9, aspartate 282, histidine 287, aspartate 323, histidine 324, and histidine 335.

Belongs to the phosphopentomutase family. Requires Mn(2+) as cofactor.

Its subcellular location is the cytoplasm. The enzyme catalyses 2-deoxy-alpha-D-ribose 1-phosphate = 2-deoxy-D-ribose 5-phosphate. It catalyses the reaction alpha-D-ribose 1-phosphate = D-ribose 5-phosphate. It functions in the pathway carbohydrate degradation; 2-deoxy-D-ribose 1-phosphate degradation; D-glyceraldehyde 3-phosphate and acetaldehyde from 2-deoxy-alpha-D-ribose 1-phosphate: step 1/2. Isomerase that catalyzes the conversion of deoxy-ribose 1-phosphate (dRib-1-P) and ribose 1-phosphate (Rib-1-P) to deoxy-ribose 5-phosphate (dRib-5-P) and ribose 5-phosphate (Rib-5-P), respectively. The chain is Phosphopentomutase from Pseudothermotoga lettingae (strain ATCC BAA-301 / DSM 14385 / NBRC 107922 / TMO) (Thermotoga lettingae).